The primary structure comprises 102 residues: Small ribosomal subunit protein uS10 (102 aa).

The protein belongs to the universal ribosomal protein uS10 family. In terms of assembly, part of the 30S ribosomal subunit.

In terms of biological role, involved in the binding of tRNA to the ribosomes. The protein is Small ribosomal subunit protein uS10 of Gluconobacter oxydans (strain 621H) (Gluconobacter suboxydans).